Here is a 193-residue protein sequence, read N- to C-terminus: Large ribosomal subunit protein uL18 (193 aa).

It belongs to the universal ribosomal protein uL18 family. As to quaternary structure, part of the 50S ribosomal subunit. Contacts the 5S and 23S rRNAs.

This is one of the proteins that bind and probably mediate the attachment of the 5S RNA into the large ribosomal subunit, where it forms part of the central protuberance. The polypeptide is Large ribosomal subunit protein uL18 (Methanobrevibacter smithii (strain ATCC 35061 / DSM 861 / OCM 144 / PS)).